A 151-amino-acid polypeptide reads, in one-letter code: Ubiquitin-conjugating enzyme E2 2 (151 aa).

Residues 1–26 (MSTSARRRLMRDFKRMQTDPPAGVSA) are disordered. Residues 4 to 150 (SARRRLMRDF…VRETVEKSWE (147 aa)) form the UBC core domain. C88 acts as the Glycyl thioester intermediate in catalysis.

It belongs to the ubiquitin-conjugating enzyme family.

The protein localises to the cytoplasm. It is found in the nucleus. The catalysed reaction is S-ubiquitinyl-[E1 ubiquitin-activating enzyme]-L-cysteine + [E2 ubiquitin-conjugating enzyme]-L-cysteine = [E1 ubiquitin-activating enzyme]-L-cysteine + S-ubiquitinyl-[E2 ubiquitin-conjugating enzyme]-L-cysteine.. It functions in the pathway protein modification; protein ubiquitination. In terms of biological role, catalyzes the covalent attachment of ubiquitin to other proteins. Plays a role in transcription regulation by catalyzing the monoubiquitination of histone H2B to form H2BK123ub1. H2BK123ub1 gives a specific tag for epigenetic transcriptional activation and is also a prerequisite for H3K4me and H3K79me formation. Also involved in postreplication repair of UV-damaged DNA, in N-end rule-dependent protein degradation and in sporulation. The chain is Ubiquitin-conjugating enzyme E2 2 (uvsJ) from Emericella nidulans (strain FGSC A4 / ATCC 38163 / CBS 112.46 / NRRL 194 / M139) (Aspergillus nidulans).